A 253-amino-acid chain; its full sequence is E3 ubiquitin-protein ligase MARCHF3 (253 aa).

Residues serine 63–glutamate 123 form an RING-CH-type zinc finger. 8 residues coordinate Zn(2+): cysteine 71, cysteine 74, cysteine 87, cysteine 89, histidine 97, cysteine 100, cysteine 113, and cysteine 116. 2 consecutive transmembrane segments (helical) span residues leucine 145–leucine 165 and alanine 182–valine 202. A phosphoserine mark is found at serine 237 and serine 243.

Interacts with MARCHF2 and STX6.

It is found in the cytoplasmic vesicle membrane. It localises to the early endosome membrane. The enzyme catalyses S-ubiquitinyl-[E2 ubiquitin-conjugating enzyme]-L-cysteine + [acceptor protein]-L-lysine = [E2 ubiquitin-conjugating enzyme]-L-cysteine + N(6)-ubiquitinyl-[acceptor protein]-L-lysine.. Its pathway is protein modification; protein ubiquitination. In terms of biological role, E3 ubiquitin-protein ligase which may be involved in endosomal trafficking. E3 ubiquitin ligases accept ubiquitin from an E2 ubiquitin-conjugating enzyme in the form of a thioester and then directly transfer the ubiquitin to targeted substrates. This Bos taurus (Bovine) protein is E3 ubiquitin-protein ligase MARCHF3 (MARCHF3).